The sequence spans 172 residues: Probable metallophosphoesterase MTH_1774 (172 aa).

Asp8, His10, Asp37, Asn59, His85, His113, and His115 together coordinate a divalent metal cation.

The protein belongs to the metallophosphoesterase superfamily. YfcE family. It depends on a divalent metal cation as a cofactor.

The chain is Probable metallophosphoesterase MTH_1774 from Methanothermobacter thermautotrophicus (strain ATCC 29096 / DSM 1053 / JCM 10044 / NBRC 100330 / Delta H) (Methanobacterium thermoautotrophicum).